The primary structure comprises 502 residues: Lysine--tRNA ligase (502 aa).

Mg(2+) contacts are provided by E413 and E420.

This sequence belongs to the class-II aminoacyl-tRNA synthetase family. As to quaternary structure, homodimer. The cofactor is Mg(2+).

It is found in the cytoplasm. The catalysed reaction is tRNA(Lys) + L-lysine + ATP = L-lysyl-tRNA(Lys) + AMP + diphosphate. This is Lysine--tRNA ligase from Haemophilus influenzae (strain PittGG).